Consider the following 166-residue polypeptide: Large ribosomal subunit protein mL49 (166 aa).

It belongs to the mitochondrion-specific ribosomal protein mL49 family. In terms of assembly, component of the mitochondrial ribosome large subunit (39S) which comprises a 16S rRNA and about 50 distinct proteins. Interacts with OXA1L.

It is found in the mitochondrion. The protein is Large ribosomal subunit protein mL49 (MRPL49) of Bos taurus (Bovine).